The primary structure comprises 511 residues: Bifunctional purine biosynthesis protein PurH (511 aa).

Positions 1–144 (MKTALLSVSD…KNFASVLPVV (144 aa)) constitute an MGS-like domain.

Belongs to the PurH family.

It catalyses the reaction (6R)-10-formyltetrahydrofolate + 5-amino-1-(5-phospho-beta-D-ribosyl)imidazole-4-carboxamide = 5-formamido-1-(5-phospho-D-ribosyl)imidazole-4-carboxamide + (6S)-5,6,7,8-tetrahydrofolate. It carries out the reaction IMP + H2O = 5-formamido-1-(5-phospho-D-ribosyl)imidazole-4-carboxamide. The protein operates within purine metabolism; IMP biosynthesis via de novo pathway; 5-formamido-1-(5-phospho-D-ribosyl)imidazole-4-carboxamide from 5-amino-1-(5-phospho-D-ribosyl)imidazole-4-carboxamide (10-formyl THF route): step 1/1. It functions in the pathway purine metabolism; IMP biosynthesis via de novo pathway; IMP from 5-formamido-1-(5-phospho-D-ribosyl)imidazole-4-carboxamide: step 1/1. The sequence is that of Bifunctional purine biosynthesis protein PurH from Pediococcus pentosaceus (strain ATCC 25745 / CCUG 21536 / LMG 10740 / 183-1w).